The following is a 494-amino-acid chain: Probable cytosol aminopeptidase (494 aa).

Mn(2+)-binding residues include K264 and D269. K276 is an active-site residue. Residues D287, D346, and E348 each coordinate Mn(2+). R350 is an active-site residue.

The protein belongs to the peptidase M17 family. The cofactor is Mn(2+).

The protein resides in the cytoplasm. It catalyses the reaction Release of an N-terminal amino acid, Xaa-|-Yaa-, in which Xaa is preferably Leu, but may be other amino acids including Pro although not Arg or Lys, and Yaa may be Pro. Amino acid amides and methyl esters are also readily hydrolyzed, but rates on arylamides are exceedingly low.. The enzyme catalyses Release of an N-terminal amino acid, preferentially leucine, but not glutamic or aspartic acids.. In terms of biological role, presumably involved in the processing and regular turnover of intracellular proteins. Catalyzes the removal of unsubstituted N-terminal amino acids from various peptides. The chain is Probable cytosol aminopeptidase (pepA) from Pasteurella multocida (strain Pm70).